Here is a 475-residue protein sequence, read N- to C-terminus: WASH complex subunit 1 (475 aa).

The segment at 1–54 is required for WASH complex assembly; the sequence is MTAVKTQHSLAGQVYAVPLIQPDLRREEAIQQVADALQYLQNISGDIFSRISQR. The WHD1 stretch occupies residues 1-167; the sequence is MTAVKTQHSL…EGLGGLPSNI (167 aa). A Glycyl lysine isopeptide (Lys-Gly) (interchain with G-Cter in ubiquitin) cross-link involves residue Lys-219. The segment at 296–475 is disordered; that stretch reads EDGALLAPPP…GDEDEDDWES (180 aa). Positions 302–318 are enriched in pro residues; it reads APPPPPPPPPPPPPPAP. The interval 357-475 is VCA; sequence QGAPKEVVDP…GDEDEDDWES (119 aa). The WH2 domain occupies 369–391; it reads GRATLLESIRQAGGIGKAKLRSV. Residues 390–406 are compositionally biased toward basic and acidic residues; it reads SVKERKLEKKKQKEQEQ. A compositionally biased stretch (gly residues) spans 432–446; it reads SGKGPGTGTSEGPGG. Residues 466-475 show a composition bias toward acidic residues; that stretch reads GDEDEDDWES.

Belongs to the WASH1 family. In terms of assembly, component of the WASH core complex also described as WASH regulatory complex SHRC composed of WASHC1, WASHC2, WASHC3, WASHC4 and WASHC5. The WASH core complex associates with the F-actin-capping protein dimer (formed by CAPZA1, CAPZA2 or CAPZA3 and CAPZB) in a transient or substoichiometric manner which was initially described as WASH complex. Interacts (via WHD1 region) with WASHC2; the interaction is direct. Interacts with BECN1; WASHC1 and AMBRA1 can competitively interact with BECN1. Interacts with BLOC1S2; may associate with the BLOC-1 complex. Interacts with tubulin gamma chain (TUBG1 or TUBG2). Interacts with TBC1D23. Ubiquitinated at Lys-219 via 'Lys-63'-linked ubiquitin chains by the TRIM27:MAGEL2 E3 ubiquitin ligase complex, leading to promote endosomal F-actin assembly.

The protein resides in the early endosome membrane. Its subcellular location is the recycling endosome membrane. Its function is as follows. Acts as a component of the WASH core complex that functions as a nucleation-promoting factor (NPF) at the surface of endosomes, where it recruits and activates the Arp2/3 complex to induce actin polymerization, playing a key role in the fission of tubules that serve as transport intermediates during endosome sorting. Regulates the trafficking of endosomal alpha5beta1 integrin to the plasma membrane and involved in invasive cell migration. In T-cells involved in endosome-to-membrane recycling of receptors including T-cell receptor (TCR), CD28 and ITGAL; proposed to be implicated in T-cell proliferation and effector function. In dendritic cells involved in endosome-to-membrane recycling of major histocompatibility complex (MHC) class II probably involving retromer and subsequently allowing antigen sampling, loading and presentation during T-cell activation. Involved in cytokinesis and following polar body extrusion during oocyte meiotic maturation. Involved in Arp2/3 complex-dependent actin assembly driving Salmonella typhimurium invasion independent of ruffling. Involved in the exocytosis of MMP14 leading to matrix remodeling during invasive migration and implicating late endosome-to-plasma membrane tubular connections and cooperation with the exocyst complex. Involved in negative regulation of autophagy independently from its role in endosomal sorting by inhibiting BECN1 ubiquitination to inactivate PIK3C3/Vps34 activity. This Rattus norvegicus (Rat) protein is WASH complex subunit 1.